Consider the following 341-residue polypeptide: Transcription factor VIP1 (341 aa).

Disordered stretches follow at residues 1–33, 59–106, and 135–156; these read MEGG…HRRA, SLDF…PEAR, and SSGE…DGEM. The tract at residues 1-162 is necessary and sufficient for transient T-DNA transformation end expression; sequence MEGGGRGPNQ…DGEMSSASFN (162 aa). The segment covering 15 to 24 has biased composition (basic and acidic residues); that stretch reads EIEHMPEAPR. Positions 71–80 are enriched in low complexity; sequence QSQQQPQASP. At S79 the chain carries Phosphoserine. Positions 163-341 are involved in homomultimerization and histone H2A binding; sequence IESILASVSG…PSYMDFTKRG (179 aa). One can recognise a bZIP domain in the interval 194–257; sequence DPKRAKRILA…SELNTENKHL (64 aa). A basic motif region spans residues 196 to 217; sequence KRAKRILANRQSAARSKERKIR. Positions 198–205 match the Nuclear localization signal motif; sequence AKRILANR. The tract at residues 222–257 is leucine-zipper; sequence LERKVQTLQNEATTLSAQVTMLQRGTSELNTENKHL. Residues 307-331 show a composition bias toward polar residues; it reads SQQSAMNQFGNKTNQQMSTNGQPSL. The segment at 307-341 is disordered; it reads SQQSAMNQFGNKTNQQMSTNGQPSLPSYMDFTKRG.

It belongs to the bZIP family. Forms homomultimers. Interacts with Agrobacterium tumefaciens VirE2 and mediates its translocation to the host nucleus. Binds to VIP2. Forms a complex made of Agrobacterium VirE2, VIP1, VIP2 and single-stranded DNA (ssDNA). The interaction with KAP1 mediates its nuclear import. Binds to the H2A histone RAT5. Interacts with MPK3 and Agrobacterium virF. Forms a complex made of VIP1, VBF and Agrobacterium virE2. Interacts with SCF(VBF) E3 ubiquitin ligase complex. Binds directly to VBF. Forms heterodimers with BZIP34 and BZIP61. In terms of processing, phosphorylated by MPK3. This phosphorylation promotes nuclear localization. As to expression, mostly expressed in dividing cells, present in leaves, roots and seedlings.

The protein resides in the cytoplasm. It localises to the nucleus. Transcription activator that binds specifically to the VIP1 response elements (VREs) DNA sequence 5'-ACNGCT-3' found in some stress genes (e.g. TRX8 and MYB44), when phosphorylated/activated by MPK3. Required for Agrobacterium VirE2 nuclear import and tumorigenicity. Promotes transient expression of T-DNA in early stages by interacting with VirE2 in complex with the T-DNA and facilitating its translocation to the nucleus, and mediates stable genetic transformation by Agrobacterium by binding H2A histone. Prevents cell differentiation and shoot formation. Limits sulfate utilization efficiency (SUE) and sulfate uptake, especially in low-sulfur conditions. Plays a role in osmosensory response by binding to the 5'-AGCTGT/G-3' DNA sequence found in the promoters of the hypoosmolarity-responsive genes CYP707A1 and CYP707A3. Involved in the negative regulation of touch-induced root bending and salt-dependent root bending. The polypeptide is Transcription factor VIP1 (Arabidopsis thaliana (Mouse-ear cress)).